Reading from the N-terminus, the 1438-residue chain is DNA polymerase III PolC-type (1438 aa).

The Exonuclease domain occupies 422 to 578 (YVVFDVETTG…YDTEATAYIF (157 aa)).

The protein belongs to the DNA polymerase type-C family. PolC subfamily.

The protein localises to the cytoplasm. It catalyses the reaction DNA(n) + a 2'-deoxyribonucleoside 5'-triphosphate = DNA(n+1) + diphosphate. Functionally, required for replicative DNA synthesis. This DNA polymerase also exhibits 3' to 5' exonuclease activity. This is DNA polymerase III PolC-type from Staphylococcus aureus (strain Mu3 / ATCC 700698).